A 128-amino-acid polypeptide reads, in one-letter code: Sirohydrochlorin cobaltochelatase (128 aa).

The Proton acceptor role is filled by histidine 9. Histidine 9 provides a ligand contact to Co(2+). Substrate is bound by residues lysine 43 and phenylalanine 68–histidine 73. Histidine 73 is a binding site for Co(2+).

It belongs to the CbiX family. CbiXS subfamily. Homotetramer; dimer of dimers.

The catalysed reaction is Co-sirohydrochlorin + 2 H(+) = sirohydrochlorin + Co(2+). It functions in the pathway cofactor biosynthesis; adenosylcobalamin biosynthesis; cob(II)yrinate a,c-diamide from sirohydrochlorin (anaerobic route): step 1/10. In terms of biological role, catalyzes the insertion of Co(2+) into sirohydrochlorin as part of the anaerobic pathway to cobalamin biosynthesis. This chain is Sirohydrochlorin cobaltochelatase, found in Saccharolobus islandicus (strain Y.N.15.51 / Yellowstone #2) (Sulfolobus islandicus).